The sequence spans 442 residues: MALPSAFLNPFVPSPVTANPRTKFARVGKGFNVSCLIKTEQTKSAVTETGVSPATKEVNEPSLSTVLVNYSADWDPYNATSTPIYQTATFKMKSATEFGEYYYSRNANPTRHTLEALLAQIDNAKFAYCFSSGMTALTSVCELVSPGDEIVTVEDIYGGSYNFINNLIGRKEGIVVKHVNTSDLDEVKRNMSNKTKLVWLESPSNPQLRVSDIRSIAKIAHAYGAILFIDNSVMSPVLSNPLDLGADIVMHSATKFIAGNSSCIGGSIATNNEELGNKIHSFQKATGCALSPKDSWICLEGIKTMALRVQEKQRNAQLIAEFLASHPKVTEISYPGLQSDPGYELHNSQSKGPGSVISFKTGSLPLSKQIVEDTKYFSMTVSFGGVGSCICLPWYTSHSSIPDSQKLKVGLTRDLVRLSVGIEDVEDLVMDLQNVLSIQPQF.

Residues M1 to C35 constitute a chloroplast transit peptide. Pyridoxal 5'-phosphate contacts are provided by Y103, R105, G133, M134, S252, and T254. Residue K255 is modified to N6-(pyridoxal phosphate)lysine.

This sequence belongs to the trans-sulfuration enzymes family. Forms homodimers. May form homotetramers from two homodimers. Requires pyridoxal 5'-phosphate as cofactor.

Its subcellular location is the plastid. It is found in the chloroplast. The enzyme catalyses L-mimosine + H2O = 3-hydroxy-4H-pyrid-4-one + pyruvate + NH4(+). It catalyses the reaction L,L-cystathionine + H2O = L-homocysteine + pyruvate + NH4(+). The catalysed reaction is an S-substituted L-cysteine + H2O = a thiol + pyruvate + NH4(+). Catalyzes the degradation of mimosine, which is a toxic secondary metabolite found in all Mimosa and Leucaena species. Catalyzes the degradation of cystathionine, but seems to have lower preference toward cystathionine over mimosine. The chain is Mimosinase, chloroplastic from Mimosa pudica (Sensitive plant).